Here is a 318-residue protein sequence, read N- to C-terminus: Methenyltetrahydromethanopterin cyclohydrolase (318 aa).

The protein belongs to the MCH family.

The protein resides in the cytoplasm. The catalysed reaction is 5,10-methenyl-5,6,7,8-tetrahydromethanopterin + H2O = N(5)-formyl-5,6,7,8-tetrahydromethanopterin + H(+). Its pathway is one-carbon metabolism; methanogenesis from CO(2); 5,10-methenyl-5,6,7,8-tetrahydromethanopterin from CO(2): step 3/3. Its function is as follows. Catalyzes the reversible interconversion of 5-formyl-H(4)MPT to methenyl-H(4)MPT(+). This Methanocella arvoryzae (strain DSM 22066 / NBRC 105507 / MRE50) protein is Methenyltetrahydromethanopterin cyclohydrolase.